A 277-amino-acid polypeptide reads, in one-letter code: Inositol monophosphatase 1 (277 aa).

The Mg(2+) site is built by E70, D90, I92, and D93. Position 70 (E70) interacts with substrate. Position 92–95 (92–95 (IDGT)) interacts with substrate. A Phosphothreonine modification is found at T168. Substrate-binding positions include 194 to 196 (GTA), E213, and D220. Mg(2+) is bound at residue D220.

The protein belongs to the inositol monophosphatase superfamily. Homodimer. Mg(2+) is required as a cofactor.

It localises to the cytoplasm. It catalyses the reaction a myo-inositol phosphate + H2O = myo-inositol + phosphate. The catalysed reaction is 1D-myo-inositol 1-phosphate + H2O = myo-inositol + phosphate. The enzyme catalyses 1D-myo-inositol 2-phosphate + H2O = myo-inositol + phosphate. It carries out the reaction 1D-myo-inositol 3-phosphate + H2O = myo-inositol + phosphate. It catalyses the reaction 1D-myo-inositol 4-phosphate + H2O = myo-inositol + phosphate. The catalysed reaction is 1D-myo-inositol 5-phosphate + H2O = myo-inositol + phosphate. The enzyme catalyses 1D-myo-inositol 6-phosphate + H2O = myo-inositol + phosphate. It carries out the reaction scyllo-inositol 1-phosphate + H2O = scyllo-inositol + phosphate. It catalyses the reaction alpha-D-galactose 1-phosphate + H2O = D-galactose + phosphate. The catalysed reaction is alpha-D-glucose 1-phosphate + H2O = D-glucose + phosphate. The enzyme catalyses D-glucose 6-phosphate + H2O = D-glucose + phosphate. It carries out the reaction beta-D-fructose 1-phosphate + H2O = D-fructose + phosphate. It catalyses the reaction glycerol 2-phosphate + H2O = glycerol + phosphate. The catalysed reaction is adenosine 2'-phosphate + H2O = adenosine + phosphate. The protein operates within polyol metabolism; myo-inositol biosynthesis; myo-inositol from D-glucose 6-phosphate: step 2/2. Activity with myo-inositol monophosphates and D-galactose 1-phosphate is inhibited by Li(+), Ca(2+) and Mn(2+), but also by Mg(2+) at concentrations above 3 mM. Phosphatase involved in the dephosphorylation of myo-inositol monophosphates to generate myo-inositol. Is also able to dephosphorylate scyllo-inositol-phosphate, myo-inositol 1,4-diphosphate, scyllo-inositol-1,3-diphosphate and scyllo-inositol-1,4-diphosphate. Also dephosphorylates in vitro other sugar-phosphates including D-galactose-1-phosphate, glucose-1-phosphate, glucose-6-phosphate, fructose-1-phosphate, beta-glycerophosphate and 2'-AMP. Responsible for the provision of inositol required for synthesis of phosphatidylinositols and polyphosphoinositides, and involved in maintaining normal brain function. Has been implicated as the pharmacological target for lithium (Li(+)) action in brain, which is used to treat bipolar affective disorder. Is equally active with 1D-myo-inositol 1-phosphate, 1D-myo-inositol 3-phosphate and D-galactose 1-phosphate. The chain is Inositol monophosphatase 1 from Homo sapiens (Human).